We begin with the raw amino-acid sequence, 141 residues long: Putative pre-16S rRNA nuclease (141 aa).

Belongs to the YqgF nuclease family.

It is found in the cytoplasm. Functionally, could be a nuclease involved in processing of the 5'-end of pre-16S rRNA. The polypeptide is Putative pre-16S rRNA nuclease (Amoebophilus asiaticus (strain 5a2)).